The chain runs to 90 residues: Auxin-responsive protein SAUR24 (90 aa).

The protein belongs to the ARG7 family.

Its subcellular location is the cell membrane. Functions as a positive effector of cell expansion through modulation of auxin transport. In Arabidopsis thaliana (Mouse-ear cress), this protein is Auxin-responsive protein SAUR24.